Reading from the N-terminus, the 501-residue chain is Solute carrier family 2, facilitated glucose transporter member 5 (501 aa).

Methionine 1 is modified (N-acetylmethionine). The Cytoplasmic portion of the chain corresponds to methionine 1–alanine 17. Residues leucine 18–valine 38 form a helical membrane-spanning segment. D-fructose is bound at residue tyrosine 31. The Extracellular portion of the chain corresponds to asparagine 39 to threonine 67. Asparagine 50 carries N-linked (GlcNAc...) asparagine glycosylation. The helical transmembrane segment at leucine 68–threonine 90 threads the bilayer. The Cytoplasmic portion of the chain corresponds to leucine 91–arginine 97. The helical transmembrane segment at lysine 98–serine 118 threads the bilayer. The Extracellular portion of the chain corresponds to glutamine 119–glutamate 125. A helical transmembrane segment spans residues leucine 126–tyrosine 148. Residues leucine 149–alanine 160 are Cytoplasmic-facing. The chain crosses the membrane as a helical span at residues leucine 161–leucine 181. Glutamine 166 provides a ligand contact to D-fructose. The Extracellular portion of the chain corresponds to arginine 182–tryptophan 191. The helical transmembrane segment at proline 192 to phenylalanine 212 threads the bilayer. At proline 213–glutamine 276 the chain is on the cytoplasmic side. The chain crosses the membrane as a helical span at residues leucine 277–tyrosine 297. D-fructose-binding positions include glutamine 287 and isoleucine 295–tyrosine 297. The Extracellular portion of the chain corresponds to tyrosine 298–aspartate 312. The helical transmembrane segment at valine 313–phenylalanine 333 threads the bilayer. Residues valine 334 to arginine 341 are Cytoplasmic-facing. Residues phenylalanine 342–leucine 362 form a helical membrane-spanning segment. Residues alanine 363–tryptophan 370 lie on the Extracellular side of the membrane. Residues methionine 371–isoleucine 393 form a helical membrane-spanning segment. Residue histidine 386 coordinates D-fructose. Topologically, residues proline 394 to tyrosine 411 are cytoplasmic. A helical membrane pass occupies residues methionine 412 to isoleucine 432. Histidine 418–tryptophan 419 is a binding site for D-fructose. Residues glutamine 433–proline 438 are Extracellular-facing. A helical membrane pass occupies residues tyrosine 439–valine 459. At proline 460–glutamine 501 the chain is on the cytoplasmic side.

Belongs to the major facilitator superfamily. Sugar transporter (TC 2.A.1.1) family. Glucose transporter subfamily. Detected at the apical membrane of villi in the jejunum. Detected in jejunum mucosa. Detected in epididymis and whole testis (at protein level). Detected in small intestine, kidney and testis. Detected in cochlea, but not in inner or outer cochlear hair cells.

It is found in the apical cell membrane. Its subcellular location is the cell membrane. The protein localises to the sarcolemma. The catalysed reaction is D-fructose(out) = D-fructose(in). Fructose uptake is inhibited by cytochalasin B. Functionally, functions as a fructose transporter that has only low activity with other monosaccharides. Can mediate the uptake of deoxyglucose, but with low efficiency. Essential for fructose uptake in the small intestine. Plays a role in the regulation of salt uptake and blood pressure in response to dietary fructose. Required for the development of high blood pressure in response to high dietary fructose intake. In Mus musculus (Mouse), this protein is Solute carrier family 2, facilitated glucose transporter member 5.